The primary structure comprises 318 residues: SPX domain-containing protein 4 (318 aa).

Residues Met1–Gln187 form the SPX domain. Over residues Ser226–His237 the composition is skewed to low complexity. Disordered regions lie at residues Ser226–Ser247 and Ser284–His318. Over residues Asn305 to His318 the composition is skewed to basic and acidic residues.

The polypeptide is SPX domain-containing protein 4 (SPX4) (Arabidopsis thaliana (Mouse-ear cress)).